Here is a 1058-residue protein sequence, read N- to C-terminus: Carbamoyl phosphate synthase large chain (1058 aa).

Residues 1 to 399 (MPIDKDIKKV…AIQKAIRSLD (399 aa)) form a carboxyphosphate synthetic domain region. Residues arginine 127, arginine 167, glycine 173, glycine 174, glutamate 206, valine 208, glutamate 213, glycine 239, isoleucine 240, histidine 241, glutamine 282, and glutamate 296 each contribute to the ATP site. In terms of domain architecture, ATP-grasp 1 spans 131–325 (GHFMDKLNEP…IAKISSKIAL (195 aa)). Mg(2+) contacts are provided by glutamine 282, glutamate 296, and asparagine 298. Mn(2+)-binding residues include glutamine 282, glutamate 296, and asparagine 298. An oligomerization domain region spans residues 400 to 538 (MGHDGFEYVE…YSTYDSGNEL (139 aa)). The carbamoyl phosphate synthetic domain stretch occupies residues 539-924 (KSSNKKKIVI…YKSQLAAGMD (386 aa)). The ATP-grasp 2 domain occupies 663–856 (AKLLNKLHIH…LAKVATWIMT (194 aa)). ATP is bound by residues arginine 699, lysine 738, leucine 740, glutamate 745, glycine 770, valine 771, histidine 772, serine 773, glutamine 813, and glutamate 827. 3 residues coordinate Mg(2+): glutamine 813, glutamate 827, and asparagine 829. Mn(2+) contacts are provided by glutamine 813, glutamate 827, and asparagine 829. Positions 923–1058 (MDLPKEGKIF…KSLNEHIDGE (136 aa)) constitute an MGS-like domain. The tract at residues 925–1058 (LPKEGKIFIS…KSLNEHIDGE (134 aa)) is allosteric domain.

The protein belongs to the CarB family. Composed of two chains; the small (or glutamine) chain promotes the hydrolysis of glutamine to ammonia, which is used by the large (or ammonia) chain to synthesize carbamoyl phosphate. Tetramer of heterodimers (alpha,beta)4. Requires Mg(2+) as cofactor. It depends on Mn(2+) as a cofactor.

It catalyses the reaction hydrogencarbonate + L-glutamine + 2 ATP + H2O = carbamoyl phosphate + L-glutamate + 2 ADP + phosphate + 2 H(+). The catalysed reaction is hydrogencarbonate + NH4(+) + 2 ATP = carbamoyl phosphate + 2 ADP + phosphate + 2 H(+). It functions in the pathway amino-acid biosynthesis; L-arginine biosynthesis; carbamoyl phosphate from bicarbonate: step 1/1. The protein operates within pyrimidine metabolism; UMP biosynthesis via de novo pathway; (S)-dihydroorotate from bicarbonate: step 1/3. In terms of biological role, large subunit of the glutamine-dependent carbamoyl phosphate synthetase (CPSase). CPSase catalyzes the formation of carbamoyl phosphate from the ammonia moiety of glutamine, carbonate, and phosphate donated by ATP, constituting the first step of 2 biosynthetic pathways, one leading to arginine and/or urea and the other to pyrimidine nucleotides. The large subunit (synthetase) binds the substrates ammonia (free or transferred from glutamine from the small subunit), hydrogencarbonate and ATP and carries out an ATP-coupled ligase reaction, activating hydrogencarbonate by forming carboxy phosphate which reacts with ammonia to form carbamoyl phosphate. This Methanobrevibacter smithii (strain ATCC 35061 / DSM 861 / OCM 144 / PS) protein is Carbamoyl phosphate synthase large chain.